The chain runs to 221 residues: Leucyl/phenylalanyl-tRNA--protein transferase (221 aa).

This sequence belongs to the L/F-transferase family.

The protein resides in the cytoplasm. It catalyses the reaction N-terminal L-lysyl-[protein] + L-leucyl-tRNA(Leu) = N-terminal L-leucyl-L-lysyl-[protein] + tRNA(Leu) + H(+). The enzyme catalyses N-terminal L-arginyl-[protein] + L-leucyl-tRNA(Leu) = N-terminal L-leucyl-L-arginyl-[protein] + tRNA(Leu) + H(+). It carries out the reaction L-phenylalanyl-tRNA(Phe) + an N-terminal L-alpha-aminoacyl-[protein] = an N-terminal L-phenylalanyl-L-alpha-aminoacyl-[protein] + tRNA(Phe). In terms of biological role, functions in the N-end rule pathway of protein degradation where it conjugates Leu, Phe and, less efficiently, Met from aminoacyl-tRNAs to the N-termini of proteins containing an N-terminal arginine or lysine. In Phenylobacterium zucineum (strain HLK1), this protein is Leucyl/phenylalanyl-tRNA--protein transferase.